The primary structure comprises 389 residues: Probable DNA double-strand break repair nuclease NurA (389 aa).

Residues aspartate 74 and aspartate 151 each contribute to the Mn(2+) site.

The protein belongs to the NurA family. It depends on Mn(2+) as a cofactor.

Its function is as follows. Involved in DNA double-strand break (DSB) repair. Probably acts with HerA to stimulate resection of the 5' strand and produce the long 3' single-strand that is required for RadA loading. The polypeptide is Probable DNA double-strand break repair nuclease NurA (Methanocaldococcus jannaschii (strain ATCC 43067 / DSM 2661 / JAL-1 / JCM 10045 / NBRC 100440) (Methanococcus jannaschii)).